Here is a 340-residue protein sequence, read N- to C-terminus: Selenide, water dikinase (340 aa).

Cysteine 13 is an active-site residue. Residues lysine 16 and 43 to 45 each bind ATP; that span reads ASD. Aspartate 46 provides a ligand contact to Mg(2+). Residues aspartate 63, aspartate 86, and 133-135 each bind ATP; that span reads GHS. Position 86 (aspartate 86) interacts with Mg(2+). Aspartate 221 is a binding site for Mg(2+).

It belongs to the selenophosphate synthase 1 family. Class I subfamily. As to quaternary structure, homodimer. Requires Mg(2+) as cofactor.

It carries out the reaction hydrogenselenide + ATP + H2O = selenophosphate + AMP + phosphate + 2 H(+). Synthesizes selenophosphate from selenide and ATP. The chain is Selenide, water dikinase from Desulfitobacterium hafniense (strain Y51).